Reading from the N-terminus, the 425-residue chain is Inhibin beta A chain (425 aa).

A signal peptide spans 1 to 20; that stretch reads MPLLWLRGFLLASCWIIVRS. A propeptide spanning residues 21 to 309 is cleaved from the precursor; it reads SPTPGSEGHS…EDHPHRRRRR (289 aa). Asn165 is a glycosylation site (N-linked (GlcNAc...) asparagine). Residues 260–289 are disordered; that stretch reads KKRKEEEGEGKKRDGEGGAGGDEEKEQSHR. A compositionally biased stretch (basic and acidic residues) spans 263–275; the sequence is KEEEGEGKKRDGE. 4 cysteine pairs are disulfide-bonded: Cys313–Cys321, Cys320–Cys390, Cys349–Cys422, and Cys353–Cys424.

It belongs to the TGF-beta family. In terms of assembly, dimeric, linked by one or more disulfide bonds. Inhibin A is a dimer of alpha/INHA and beta-A/INHBA. Activin A is a homodimer of beta-A/INHBA. Activin AB is a dimer of beta-A/INHBA and beta-B/INHBB. Interacts with FST and FSTL3; these interactions prevent activin A interaction to its type II receptor. Activin A interacts with ACVR2A. Activin A interacts with BMPR2. Inhibin A interacts with ACVR1; this interaction creates a non-signaling complex (NSC) that inhibits ACVR1-mediated BMP signaling. Inhibin A interacts with ACVR2A.

Its subcellular location is the secreted. In terms of biological role, inhibins/activins are involved in regulating a number of diverse functions such as hypothalamic and pituitary hormone secretion, gonadal hormone secretion, germ cell development and maturation, erythroid differentiation, insulin secretion, nerve cell survival, embryonic axial development or bone growth, depending on their subunit composition. Activin A is a homodimer of INHBA that plays a role in several essential biological processes including embryonic development, stem cell maintenance and differentiation, haematopoiesis, cell proliferation and tissue fibrosis. Signals through type I (such as ACVR1B or ACVR1C) and type II receptors (such as ACVR2A, ACVR2B or BMPR2) which, upon ligand binding, phosphorylate SMAD2 and SMAD3 intracellular signaling mediators that form a complex with SMAD4, translocate to the nucleus and modulate gene expression. Can also activate alternative non-canonical intracellular signaling pathways including the p38 MAPK, extracellular signal-regulated kinases 1/2 (ERK1/2) and c-Jun N-terminal kinases (JNKs) to modulate cell migration and differentiation. Alternatively, promotes osteoblastic differentiation via ACVRL1-SMAD1/5/9 pathway. In addition, can engage the type I receptor ACVR1 to form an ACVR1-activin A-type II receptor non-signaling complex (NSC) that renders receptors unavailable for engagement with BMPs, hence resulting in an apparent inhibition of ACVR1-mediated BMP signaling. Functionally, inhibin A is a dimer of alpha/INHA and beta-A/INHBA that functions as a feedback regulator in the hypothalamic-pituitary-gonadal (HPG) axis. Inhibits the secretion of FSH from the anterior pituitary gland by acting on pituitary gonadotrope cells. Antagonizes activin A by binding to the proteoglycan, betaglycan, and forming a stable complex with and, thereby, sequestering type II activin receptors while excluding type I receptor. The chain is Inhibin beta A chain (INHBA) from Ovis aries (Sheep).